The sequence spans 117 residues: Large ribosomal subunit protein uL18 (117 aa).

The protein belongs to the universal ribosomal protein uL18 family. In terms of assembly, part of the 50S ribosomal subunit; part of the 5S rRNA/L5/L18/L25 subcomplex. Contacts the 5S and 23S rRNAs.

Its function is as follows. This is one of the proteins that bind and probably mediate the attachment of the 5S RNA into the large ribosomal subunit, where it forms part of the central protuberance. In Vibrio cholerae serotype O1 (strain ATCC 39541 / Classical Ogawa 395 / O395), this protein is Large ribosomal subunit protein uL18.